We begin with the raw amino-acid sequence, 907 residues long: Protein translocase subunit SecA (907 aa).

ATP-binding positions include Gln87, 105–109 (GEGKT), and Asp512. The segment at 834–907 (QEDVERMEEQ…KKYKQCHGKI (74 aa)) is disordered. 2 stretches are compositionally biased toward basic and acidic residues: residues 836–853 (DVER…EAAR) and 873–888 (EEAH…KVGR). Zn(2+) is bound by residues Cys892, Cys894, Cys903, and His904. The segment covering 898-907 (KKYKQCHGKI) has biased composition (basic residues).

It belongs to the SecA family. Monomer and homodimer. Part of the essential Sec protein translocation apparatus which comprises SecA, SecYEG and auxiliary proteins SecDF-YajC and YidC. Zn(2+) serves as cofactor.

The protein resides in the cell inner membrane. It is found in the cytoplasm. The enzyme catalyses ATP + H2O + cellular proteinSide 1 = ADP + phosphate + cellular proteinSide 2.. Functionally, part of the Sec protein translocase complex. Interacts with the SecYEG preprotein conducting channel. Has a central role in coupling the hydrolysis of ATP to the transfer of proteins into and across the cell membrane, serving both as a receptor for the preprotein-SecB complex and as an ATP-driven molecular motor driving the stepwise translocation of polypeptide chains across the membrane. This is Protein translocase subunit SecA from Aliivibrio fischeri (strain MJ11) (Vibrio fischeri).